We begin with the raw amino-acid sequence, 406 residues long: 4-hydroxy-3-methylbut-2-en-1-yl diphosphate synthase (ferredoxin) (406 aa).

[4Fe-4S] cluster contacts are provided by Cys-315, Cys-318, Cys-349, and Glu-356.

The protein belongs to the IspG family. The cofactor is [4Fe-4S] cluster.

The enzyme catalyses (2E)-4-hydroxy-3-methylbut-2-enyl diphosphate + 2 oxidized [2Fe-2S]-[ferredoxin] + H2O = 2-C-methyl-D-erythritol 2,4-cyclic diphosphate + 2 reduced [2Fe-2S]-[ferredoxin] + H(+). It participates in isoprenoid biosynthesis; isopentenyl diphosphate biosynthesis via DXP pathway; isopentenyl diphosphate from 1-deoxy-D-xylulose 5-phosphate: step 5/6. Its function is as follows. Converts 2C-methyl-D-erythritol 2,4-cyclodiphosphate (ME-2,4cPP) into 1-hydroxy-2-methyl-2-(E)-butenyl 4-diphosphate. This is 4-hydroxy-3-methylbut-2-en-1-yl diphosphate synthase (ferredoxin) from Gloeothece citriformis (strain PCC 7424) (Cyanothece sp. (strain PCC 7424)).